Reading from the N-terminus, the 237-residue chain is Ribosomal RNA small subunit methyltransferase G (237 aa).

Residues 1 to 25 are disordered; it reads MASRHSPQTAAQPDAADKAQALRLT. Positions 7 to 21 are enriched in low complexity; the sequence is PQTAAQPDAADKAQA. 3 residues coordinate S-adenosyl-L-methionine: Gly-85, Phe-90, and Arg-155.

The protein belongs to the methyltransferase superfamily. RNA methyltransferase RsmG family.

It localises to the cytoplasm. It catalyses the reaction guanosine(527) in 16S rRNA + S-adenosyl-L-methionine = N(7)-methylguanosine(527) in 16S rRNA + S-adenosyl-L-homocysteine. Its function is as follows. Specifically methylates the N7 position of guanine in position 527 of 16S rRNA. This is Ribosomal RNA small subunit methyltransferase G from Rhodopseudomonas palustris (strain HaA2).